Here is a 118-residue protein sequence, read N- to C-terminus: Basic phospholipase A2 PA-13 (118 aa).

7 disulfides stabilise this stretch: Cys11/Cys71, Cys27/Cys117, Cys29/Cys45, Cys44/Cys98, Cys51/Cys91, Cys60/Cys84, and Cys78/Cys89. Residues Tyr28, Gly30, and Gly32 each coordinate Ca(2+). His48 is a catalytic residue. Residue Asp49 participates in Ca(2+) binding. Asp92 is a catalytic residue.

The protein belongs to the phospholipase A2 family. Group I subfamily. D49 sub-subfamily. The cofactor is Ca(2+). As to expression, expressed by the venom gland.

It is found in the secreted. The catalysed reaction is a 1,2-diacyl-sn-glycero-3-phosphocholine + H2O = a 1-acyl-sn-glycero-3-phosphocholine + a fatty acid + H(+). Functionally, PLA2 catalyzes the calcium-dependent hydrolysis of the 2-acyl groups in 3-sn-phosphoglycerides. This is Basic phospholipase A2 PA-13 from Pseudechis australis (Mulga snake).